The following is a 518-amino-acid chain: Nuclear receptor ROR-gamma (518 aa).

The segment at 1–30 (MDRAPQRQHQASRELLAAKKTHTSQIEVIP) is modulating. 2 consecutive NR C4-type zinc fingers follow at residues 31–51 (CKIC…CEGC) and 67–91 (CTRQ…LQKC). A DNA-binding region (nuclear receptor) is located at residues 31 to 96 (CKICGDKSSG…RLQKCLALGM (66 aa)). Disordered regions lie at residues 105 to 183 (RMSK…SGSG) and 238 to 258 (HPGL…SFRS). Over residues 109–118 (KQRDSLHAEV) the composition is skewed to basic and acidic residues. Residues 119-130 (QKQLQQRQQQQQ) are compositionally biased toward low complexity. The 240-residue stretch at 269–508 (EIEHLVQSVC…PPLYKELFST (240 aa)) folds into the NR LBD domain. Positions 501–506 (LYKELF) match the AF-2 motif.

The protein belongs to the nuclear hormone receptor family. NR1 subfamily. In terms of assembly, interacts (via AF-2 motif) with the coactivators NCOA1, NCOA2 and PPARGC1A (via LXXLL motif). Interacts with the corepressor NCOR1. Interacts with CRY1. Interacts (via AF-2 motif) with PROX1. Interacts with FOXP3. Interacts with NR0B2.

It is found in the nucleus. Functionally, nuclear receptor that binds DNA as a monomer to ROR response elements (RORE) containing a single core motif half-site 5'-AGGTCA-3' preceded by a short A-T-rich sequence. Key regulator of cellular differentiation, immunity, peripheral circadian rhythm as well as lipid, steroid, xenobiotics and glucose metabolism. Considered to have intrinsic transcriptional activity, have some natural ligands like oxysterols that act as agonists (25-hydroxycholesterol) or inverse agonists (7-oxygenated sterols), enhancing or repressing the transcriptional activity, respectively. Recruits distinct combinations of cofactors to target gene regulatory regions to modulate their transcriptional expression, depending on the tissue, time and promoter contexts. Regulates the circadian expression of clock genes such as CRY1, BMAL1 and NR1D1 in peripheral tissues and in a tissue-selective manner. Competes with NR1D1 for binding to their shared DNA response element on some clock genes such as BMAL1, CRY1 and NR1D1 itself, resulting in NR1D1-mediated repression or RORC-mediated activation of the expression, leading to the circadian pattern of clock genes expression. Therefore influences the period length and stability of the clock. Involved in the regulation of the rhythmic expression of genes involved in glucose and lipid metabolism, including PLIN2 and AVPR1A. Negative regulator of adipocyte differentiation through the regulation of early phase genes expression, such as MMP3. Controls adipogenesis as well as adipocyte size and modulates insulin sensitivity in obesity. In liver, has specific and redundant functions with RORA as positive or negative modulator of expression of genes encoding phase I and Phase II proteins involved in the metabolism of lipids, steroids and xenobiotics, such as SULT1E1. Also plays a role in the regulation of hepatocyte glucose metabolism through the regulation of G6PC1 and PCK1. Essential for thymopoiesis and the development of several secondary lymphoid tissues, including lymph nodes and Peyer's patches. Required for the generation of LTi (lymphoid tissue inducer) cells. Regulates thymocyte survival through DNA-binding on ROREs of target gene promoter regions and recruitment of coactivaros via the AF-2. Also plays a key role, downstream of IL6 and TGFB and synergistically with RORA, for lineage specification of uncommitted CD4(+) T-helper (T(H)) cells into T(H)17 cells, antagonizing the T(H)1 program. Probably regulates IL17 and IL17F expression on T(H) by binding to the essential enhancer conserved non-coding sequence 2 (CNS2) in the IL17-IL17F locus. May also play a role in the pre-TCR activation cascade leading to the maturation of alpha/beta T-cells and may participate in the regulation of DNA accessibility in the TCR-J(alpha) locus. Regulates the rhythmic expression of PROX1 and promotes its nuclear localization. Plays an indispensable role in the induction of IFN-gamma dependent anti-mycobacterial systemic immunity. This chain is Nuclear receptor ROR-gamma (RORC), found in Pongo abelii (Sumatran orangutan).